We begin with the raw amino-acid sequence, 233 residues long: Lipoprotein-releasing system ATP-binding protein LolD (233 aa).

One can recognise an ABC transporter domain in the interval 10 to 233 (YRLEGVGKEY…AGELYDQHRP (224 aa)). An ATP-binding site is contributed by 46–53 (GASGSGKS).

It belongs to the ABC transporter superfamily. Lipoprotein translocase (TC 3.A.1.125) family. In terms of assembly, the complex is composed of two ATP-binding proteins (LolD) and two transmembrane proteins (LolC and LolE).

Its subcellular location is the cell inner membrane. In terms of biological role, part of the ABC transporter complex LolCDE involved in the translocation of mature outer membrane-directed lipoproteins, from the inner membrane to the periplasmic chaperone, LolA. Responsible for the formation of the LolA-lipoprotein complex in an ATP-dependent manner. The chain is Lipoprotein-releasing system ATP-binding protein LolD from Nitratidesulfovibrio vulgaris (strain ATCC 29579 / DSM 644 / CCUG 34227 / NCIMB 8303 / VKM B-1760 / Hildenborough) (Desulfovibrio vulgaris).